Reading from the N-terminus, the 375-residue chain is DNA replication and repair protein RecF (375 aa).

30–37 (GLNGQGKT) contacts ATP.

This sequence belongs to the RecF family.

It localises to the cytoplasm. In terms of biological role, the RecF protein is involved in DNA metabolism; it is required for DNA replication and normal SOS inducibility. RecF binds preferentially to single-stranded, linear DNA. It also seems to bind ATP. The chain is DNA replication and repair protein RecF from Halothermothrix orenii (strain H 168 / OCM 544 / DSM 9562).